The sequence spans 122 residues: Small ribosomal subunit protein uS13 (122 aa).

The interval 97 to 122 (PVRGQRTHTNARTRKGPAKAIAGKKK) is disordered.

This sequence belongs to the universal ribosomal protein uS13 family. In terms of assembly, part of the 30S ribosomal subunit. Forms a loose heterodimer with protein S19. Forms two bridges to the 50S subunit in the 70S ribosome.

Functionally, located at the top of the head of the 30S subunit, it contacts several helices of the 16S rRNA. In the 70S ribosome it contacts the 23S rRNA (bridge B1a) and protein L5 of the 50S subunit (bridge B1b), connecting the 2 subunits; these bridges are implicated in subunit movement. Contacts the tRNAs in the A and P-sites. This is Small ribosomal subunit protein uS13 from Bartonella henselae (strain ATCC 49882 / DSM 28221 / CCUG 30454 / Houston 1) (Rochalimaea henselae).